Reading from the N-terminus, the 370-residue chain is tRNA/tmRNA (uracil-C(5))-methyltransferase (370 aa).

S-adenosyl-L-methionine-binding residues include Gln195, Tyr221, Asn226, Glu242, and Asp302. Cys327 (nucleophile) is an active-site residue. Residue Glu361 is the Proton acceptor of the active site.

Belongs to the class I-like SAM-binding methyltransferase superfamily. RNA M5U methyltransferase family. TrmA subfamily.

It catalyses the reaction uridine(54) in tRNA + S-adenosyl-L-methionine = 5-methyluridine(54) in tRNA + S-adenosyl-L-homocysteine + H(+). The enzyme catalyses uridine(341) in tmRNA + S-adenosyl-L-methionine = 5-methyluridine(341) in tmRNA + S-adenosyl-L-homocysteine + H(+). Functionally, dual-specificity methyltransferase that catalyzes the formation of 5-methyluridine at position 54 (m5U54) in all tRNAs, and that of position 341 (m5U341) in tmRNA (transfer-mRNA). In Wolinella succinogenes (strain ATCC 29543 / DSM 1740 / CCUG 13145 / JCM 31913 / LMG 7466 / NCTC 11488 / FDC 602W) (Vibrio succinogenes), this protein is tRNA/tmRNA (uracil-C(5))-methyltransferase.